Reading from the N-terminus, the 561-residue chain is Nucleoprotein (561 aa).

Positions 53–237 (MRKDKRSEAD…ITQEPAQINI (185 aa)) are binding site for the cap structure m7GTP. 2 residues coordinate Mn(2+): Asp-380 and Glu-382. Residues Glu-390, Cys-497, His-500, and Cys-521 each coordinate Zn(2+). Asp-525 is a Mn(2+) binding site.

The protein belongs to the arenaviridae nucleocapsid protein family. In terms of assembly, homomultimerizes to form the nucleocapsid. Binds to viral genomic RNA. Interacts with glycoprotein G2. Interacts with protein Z; this interaction probably directs the encapsidated genome to budding sites. Interacts with protein L; this interaction does not interfere with Z-L interaction. Interacts with host IKBKE (via Protein kinase domain); the interaction inhibits IKBKE kinase activity.

Its subcellular location is the virion. It is found in the host cytoplasm. Encapsidates the genome, protecting it from nucleases. The encapsidated genomic RNA is termed the nucleocapsid (NC). Serves as template for viral transcription and replication. The increased presence of protein N in host cell does not seem to trigger the switch from transcription to replication as observed in other negative strain RNA viruses. Through the interaction with host IKBKE, strongly inhibits the phosphorylation and nuclear translocation of host IRF3, a protein involved in interferon activation pathway, leading to the inhibition of interferon-beta and IRF3-dependent promoters activation. Also encodes a functional 3'-5' exoribonuclease that degrades preferentially dsRNA substrates and thereby participates in the suppression of interferon induction. The chain is Nucleoprotein from Allpahuayo mammarenavirus (isolate Rat/Peru/CLHP-2472/1997) (ALLV).